The following is a 565-amino-acid chain: NAD-dependent malic enzyme (565 aa).

The active-site Proton donor is Tyr-104. Arg-157 is a binding site for NAD(+). Lys-175 (proton acceptor) is an active-site residue. 3 residues coordinate a divalent metal cation: Glu-246, Asp-247, and Asp-270. NAD(+) contacts are provided by Asp-270 and Asn-418.

The protein belongs to the malic enzymes family. As to quaternary structure, homotetramer. It depends on Mg(2+) as a cofactor. Requires Mn(2+) as cofactor.

The enzyme catalyses (S)-malate + NAD(+) = pyruvate + CO2 + NADH. It catalyses the reaction oxaloacetate + H(+) = pyruvate + CO2. This chain is NAD-dependent malic enzyme, found in Edwardsiella ictaluri (strain 93-146).